We begin with the raw amino-acid sequence, 432 residues long: Trigger factor (432 aa).

In terms of domain architecture, PPIase FKBP-type spans 163 to 248 (GDIAVIDFEG…LKALNKKELP (86 aa)).

The protein belongs to the FKBP-type PPIase family. Tig subfamily.

The protein resides in the cytoplasm. The enzyme catalyses [protein]-peptidylproline (omega=180) = [protein]-peptidylproline (omega=0). In terms of biological role, involved in protein export. Acts as a chaperone by maintaining the newly synthesized protein in an open conformation. Functions as a peptidyl-prolyl cis-trans isomerase. In Thermoanaerobacter pseudethanolicus (strain ATCC 33223 / 39E) (Clostridium thermohydrosulfuricum), this protein is Trigger factor.